Reading from the N-terminus, the 2210-residue chain is Mediator of RNA polymerase II transcription subunit 13-like (2210 aa).

Polar residues predominate over residues 391 to 400; the sequence is SKRSQMSTPT. Disordered regions lie at residues 391–414, 435–489, and 519–582; these read SKRS…TWDF, AVGP…PFHH, and VSSS…NPAL. Over residues 445–458 the composition is skewed to low complexity; the sequence is SQPGFSAGPSSSSS. Basic and acidic residues predominate over residues 468–480; the sequence is KTAERQEKGDKLQ. Residues 533 to 544 are compositionally biased toward polar residues; that stretch reads SRNTSKQMNLNP. Positions 551–560 are enriched in pro residues; it reads PISPLPPTLS. Residues Ser-553 and Ser-560 each carry the phosphoserine modification. The short motif at 669-673 is the LXXLL motif 1 element; that stretch reads LQRLL. Residues 736 to 752 are compositionally biased toward basic and acidic residues; that stretch reads GTEKDSLKKNKSEDGFG. The disordered stretch occupies residues 736–770; the sequence is GTEKDSLKKNKSEDGFGTKDVTTPGHSTPVPDGKN. Phosphoserine occurs at positions 817, 826, and 923. The segment at 1016 to 1096 is disordered; the sequence is PQMNTPVTLN…STTRPLNSVE (81 aa). Residues 1025 to 1036 are compositionally biased toward low complexity; that stretch reads NSAAPASNSGAG. Over residues 1077 to 1092 the composition is skewed to polar residues; the sequence is TDQGSPASTPSTTRPL. Positions 1225–1229 match the LXXLL motif 2 motif; the sequence is LLLLL. Positions 1380-1401 are leucine-zipper; that stretch reads LPIPTLLVGYDKDFLTISPFSL. Disordered stretches follow at residues 1530–1656 and 2045–2080; these read QTPP…VTER and GNLH…QGER. Over residues 1531-1608 the composition is skewed to low complexity; that stretch reads TPPAAAQGQA…ISTTSSSGFS (78 aa). The segment covering 1615–1629 has biased composition (polar residues); sequence NPSTGGISADRTQGN. Residues 1637–1650 show a composition bias toward low complexity; the sequence is DPGQSSSQPSQDGQ. Ser-2083 bears the Phosphoserine mark.

It belongs to the Mediator complex subunit 13 family. In terms of assembly, component of the Mediator complex, which is composed of MED1, MED4, MED6, MED7, MED8, MED9, MED10, MED11, MED12, MED13, MED13L, MED14, MED15, MED16, MED17, MED18, MED19, MED20, MED21, MED22, MED23, MED24, MED25, MED26, MED27, MED29, MED30, MED31, CCNC, CDK8 and CDC2L6/CDK11. The MED12, MED13, CCNC and CDK8 subunits form a distinct module termed the CDK8 module. Mediator containing the CDK8 module is less active than Mediator lacking this module in supporting transcriptional activation. Individual preparations of the Mediator complex lacking one or more distinct subunits have been variously termed ARC, CRSP, DRIP, PC2, SMCC and TRAP. Highly expressed in brain (cerebellum), heart (aorta), skeletal muscle, kidney, placenta and peripheral blood leukocytes. Highly expressed in fetal brain.

The protein resides in the nucleus. In terms of biological role, component of the Mediator complex, a coactivator involved in the regulated transcription of nearly all RNA polymerase II-dependent genes. Mediator functions as a bridge to convey information from gene-specific regulatory proteins to the basal RNA polymerase II transcription machinery. Mediator is recruited to promoters by direct interactions with regulatory proteins and serves as a scaffold for the assembly of a functional preinitiation complex with RNA polymerase II and the general transcription factors. This subunit may specifically regulate transcription of targets of the Wnt signaling pathway and SHH signaling pathway. The sequence is that of Mediator of RNA polymerase II transcription subunit 13-like (MED13L) from Homo sapiens (Human).